The primary structure comprises 218 residues: Glutathione S-transferase U22 (218 aa).

At alanine 2 the chain carries N-acetylalanine. A GST N-terminal domain is found at 3 to 82 (DEVILLDFWP…YIDEVWSDKN (80 aa)). Glutathione-binding positions include 13–14 (SP), 39–40 (DK), 53–54 (KI), and 66–67 (ES). The region spanning 88–208 (DPYQRAQARF…LHDSEKILAF (121 aa)) is the GST C-terminal domain. Threonine 149 carries the phosphothreonine modification.

This sequence belongs to the GST superfamily. Tau family.

The protein resides in the cytoplasm. The protein localises to the cytosol. It carries out the reaction RX + glutathione = an S-substituted glutathione + a halide anion + H(+). May be involved in the conjugation of reduced glutathione to a wide number of exogenous and endogenous hydrophobic electrophiles and have a detoxification role against certain herbicides. This is Glutathione S-transferase U22 (GSTU22) from Arabidopsis thaliana (Mouse-ear cress).